Reading from the N-terminus, the 347-residue chain is Phosphoribosylformylglycinamidine cyclo-ligase (347 aa).

It belongs to the AIR synthase family.

Its subcellular location is the cytoplasm. It carries out the reaction 2-formamido-N(1)-(5-O-phospho-beta-D-ribosyl)acetamidine + ATP = 5-amino-1-(5-phospho-beta-D-ribosyl)imidazole + ADP + phosphate + H(+). It participates in purine metabolism; IMP biosynthesis via de novo pathway; 5-amino-1-(5-phospho-D-ribosyl)imidazole from N(2)-formyl-N(1)-(5-phospho-D-ribosyl)glycinamide: step 2/2. In Alcanivorax borkumensis (strain ATCC 700651 / DSM 11573 / NCIMB 13689 / SK2), this protein is Phosphoribosylformylglycinamidine cyclo-ligase.